Reading from the N-terminus, the 953-residue chain is Isoleucine--tRNA ligase (953 aa).

A 'HIGH' region motif is present at residues 57–67 (PYANGDIHIGH). L-isoleucyl-5'-AMP is bound at residue glutamate 582. Residues 623–627 (KMSKS) carry the 'KMSKS' region motif. Lysine 626 contributes to the ATP binding site. The Zn(2+) site is built by cysteine 916, cysteine 919, cysteine 936, and cysteine 939.

Belongs to the class-I aminoacyl-tRNA synthetase family. IleS type 1 subfamily. As to quaternary structure, monomer. The cofactor is Zn(2+).

The protein localises to the cytoplasm. It carries out the reaction tRNA(Ile) + L-isoleucine + ATP = L-isoleucyl-tRNA(Ile) + AMP + diphosphate. Catalyzes the attachment of isoleucine to tRNA(Ile). As IleRS can inadvertently accommodate and process structurally similar amino acids such as valine, to avoid such errors it has two additional distinct tRNA(Ile)-dependent editing activities. One activity is designated as 'pretransfer' editing and involves the hydrolysis of activated Val-AMP. The other activity is designated 'posttransfer' editing and involves deacylation of mischarged Val-tRNA(Ile). The chain is Isoleucine--tRNA ligase from Bordetella petrii (strain ATCC BAA-461 / DSM 12804 / CCUG 43448).